We begin with the raw amino-acid sequence, 103 residues long: Stefin-3 (103 aa).

Residues 52 to 56 (QVVAG) carry the Secondary area of contact motif.

The protein belongs to the cystatin family.

It localises to the cytoplasm. Its function is as follows. This is an intracellular thiol proteinase inhibitor. This Mus musculus (Mouse) protein is Stefin-3 (Stfa3).